Consider the following 664-residue polypeptide: Cyclic nucleotide-gated channel alpha-2 (664 aa).

A compositionally biased stretch (polar residues) spans 1-11; it reads MTEKTNGVKSS. Positions 1–49 are disordered; that stretch reads MTEKTNGVKSSPANNHNHHAPPAIKANGKDDHRTSSRPHSAADDDTSSE. Over 1-144 the chain is Cytoplasmic; that stretch reads MTEKTNGVKS…PAGDWYYCWL (144 aa). A compositionally biased stretch (low complexity) spans 12-23; it reads PANNHNHHAPPA. The helical transmembrane segment at 145–166 threads the bilayer; the sequence is FVIAMPVLYNWCLLVARACFSD. Over 167 to 176 the chain is Extracellular; sequence LQKGYYLVWL. A helical transmembrane segment spans residues 177-197; sequence VLDYVSDVVYIADLFIRLRTG. Over 198-222 the chain is Cytoplasmic; sequence FLEQGLLVKDTKKLRDNYIHTLQFK. Residues 223–241 traverse the membrane as a helical segment; sequence LDVASIIPTDLIYFAVDIH. The Extracellular segment spans residues 242–246; sequence SPEVR. Residues 247 to 265 form a helical membrane-spanning segment; sequence FNRLLHFARMFEFFDRTET. The Cytoplasmic segment spans residues 266-272; it reads RTNYPNI. The interval 270-378 is ion conduction pathway; that stretch reads PNIFRISNLV…GNVGSMISNM (109 aa). Residues 273–296 form a helical membrane-spanning segment; the sequence is FRISNLVLYILVIIHWNACIYYAI. The Extracellular portion of the chain corresponds to 297–319; sequence SKSIGFGVDTWVYPNITDPEYGY. Transmembrane regions (helical) follow at residues 320–354 and 355–379; these read LARE…LFVI and FDFL…SNMN. Positions 337-340 are selectivity filter; the sequence is TIGE. The interval 380–456 is C-linker; it reads ATRAEFQAKI…STLKKVRIFH (77 aa). At 380–664 the chain is on the cytoplasmic side; that stretch reads ATRAEFQAKI…SPELAAADEP (285 aa). Residues 460–580 are cyclic nucleotide-binding domain; it reads AGLLVELVLK…EERGREILMK (121 aa). 3',5'-cyclic GMP-binding residues include Gly520, Ser523, Arg536, and Thr537. 3',5'-cyclic AMP contacts are provided by Arg536 and Thr537. The stretch at 597 to 651 forms a coiled coil; sequence VQEKLGQLETNMETLYTRFGRLLAEYTGAQQKLKQRITVLETKMKQNNEDDYLSD. The tract at residues 641–664 is disordered; sequence KQNNEDDYLSDGMNSPELAAADEP.

Belongs to the cyclic nucleotide-gated cation channel (TC 1.A.1.5) family. CNGA2 subfamily. The olfactory cyclic nucleotide-gated channel is an heterotetramer composed of CNGA2, CNGA4 and CNGB1b subunits with 2:1:1 stoichiometry.

Its subcellular location is the cell projection. It localises to the cilium membrane. The catalysed reaction is Ca(2+)(in) = Ca(2+)(out). The enzyme catalyses Na(+)(in) = Na(+)(out). It catalyses the reaction K(+)(in) = K(+)(out). It carries out the reaction NH4(+)(in) = NH4(+)(out). The catalysed reaction is Rb(+)(in) = Rb(+)(out). The enzyme catalyses Li(+)(in) = Li(+)(out). It catalyses the reaction Cs(+)(in) = Cs(+)(out). Functionally, pore-forming subunit of the olfactory cyclic nucleotide-gated channel. Operates in the cilia of olfactory sensory neurons where chemical stimulation of the odorant is converted to an electrical signal. Mediates odorant-induced cAMP-dependent Ca(2+) influx triggering neuron depolarization. The rise of intracellular Ca(2+) levels potentiates the olfactory response by activating Ca(2+)-dependent Cl(-) channels, but it also serves as a negative feedback signal to desensitize the channel for rapid adaptation to odorants. Conducts cAMP- and cGMP-gated ion currents, with permeability for monovalent and divalent cations. The chain is Cyclic nucleotide-gated channel alpha-2 from Homo sapiens (Human).